The primary structure comprises 687 residues: Dictomallein (687 aa).

Disordered regions lie at residues 1-45 and 73-112; these read MGNG…SRRL and TAGG…STSA. The Peptidase M66 domain occupies 233–501; sequence PVFGTDADVQ…QAWIASRVLA (269 aa). H393 contacts Zn(2+). The active site involves E394. The Zn(2+) site is built by H397 and H403.

It belongs to the dictomallein family. The cofactor is Zn(2+).

This is Dictomallein (dtmL) from Burkholderia pseudomallei (strain 1710b).